A 359-amino-acid polypeptide reads, in one-letter code: Membrane-bound lytic murein transglycosylase C (359 aa).

The signal sequence occupies residues 1–16; the sequence is MKKYLALALIAPLLIS. Cysteine 17 carries N-palmitoyl cysteine lipidation. A lipid anchor (S-diacylglycerol cysteine) is attached at cysteine 17.

It belongs to the transglycosylase Slt family.

It localises to the cell outer membrane. The enzyme catalyses Exolytic cleavage of the (1-&gt;4)-beta-glycosidic linkage between N-acetylmuramic acid (MurNAc) and N-acetylglucosamine (GlcNAc) residues in peptidoglycan, from either the reducing or the non-reducing ends of the peptidoglycan chains, with concomitant formation of a 1,6-anhydrobond in the MurNAc residue.. Functionally, murein-degrading enzyme. May play a role in recycling of muropeptides during cell elongation and/or cell division. The sequence is that of Membrane-bound lytic murein transglycosylase C from Escherichia coli O81 (strain ED1a).